The sequence spans 1301 residues: ABC transporter BEA3 (1301 aa).

The tract at residues 1 to 30 (MGKRTAENSAANGEGEEKHPEIGVDGRPEK) is disordered. Positions 15 to 30 (GEEKHPEIGVDGRPEK) are enriched in basic and acidic residues. 4 consecutive transmembrane segments (helical) span residues 54–74 (VGVI…IVFG), 103–123 (LYLL…NFAF), 177–197 (LGVF…AFIY), and 203–223 (LVTF…LPYI). An ABC transmembrane type-1 1 domain is found at 54-345 (VGVIASIGVG…ISTPLLAVSK (292 aa)). Residue Asn-229 is glycosylated (N-linked (GlcNAc...) asparagine). A run of 2 helical transmembrane segments spans residues 281 to 301 (FIAL…GLAF) and 313 to 333 (INQL…VTAM). The 290-residue stretch at 378-667 (IILEDVTFAY…EAGLYYNLVN (290 aa)) folds into the ABC transporter 1 domain. Residue 413–420 (GPSGSGKS) coordinates ATP. The segment covering 442 to 454 (VEKPTDKKNNGGK) has biased composition (basic and acidic residues). The interval 442 to 461 (VEKPTDKKNNGGKEEDEQEL) is disordered. N-linked (GlcNAc...) asparagine glycans are attached at residues Asn-511 and Asn-618. The interval 682 to 708 (VIAKEERPSSVHEKAHTESTIEEKPLE) is disordered. The 290-residue stretch at 735–1024 (ALTLFFSACA…ALSFGPNVAQ (290 aa)) folds into the ABC transmembrane type-1 2 domain. 6 helical membrane-spanning segments follow: residues 745 to 765 (GAAV…FGYL), 779 to 799 (SLMW…TFFL), 858 to 878 (SVFI…AFAW), 880 to 900 (LALV…YWRM), 961 to 981 (WVSL…AIVL), and 987 to 1007 (LLLS…SVLN). An ABC transporter 2 domain is found at 1060–1296 (IELENIYFKY…RGVYWQMCQS (237 aa)). 1094–1101 (GASGSGKS) serves as a coordination point for ATP.

The protein belongs to the ABC transporter superfamily. ABCB family. Multidrug resistance exporter (TC 3.A.1.201) subfamily.

The protein localises to the cell membrane. Its function is as follows. ABC transporter; part of the gene cluster that mediates the biosynthesis of beauvericin (BEA), a non-ribosomal cyclic hexadepsipeptide that shows antibiotic, antifungal, insecticidal, and cancer cell antiproliferative and antihaptotactic activity. Functions as a regulator of beauvericin production, rather than in BEA transport out of the cell. Beauvericin has low toxicity to the producing fungus and BEA3 does not play a role in detoxification and self-protection of the producing fungus. This Gibberella fujikuroi (strain CBS 195.34 / IMI 58289 / NRRL A-6831) (Bakanae and foot rot disease fungus) protein is ABC transporter BEA3.